The sequence spans 68 residues: Conotoxin reg3.14 (68 aa).

An N-terminal signal peptide occupies residues 1–22 (MMSKLGVLLTICLLLFPLSVLP). A propeptide spanning residues 23-52 (LDGDQPADQPAERMQDISAEQNPWFDPVKR) is cleaved from the precursor. 3 disulfides stabilise this stretch: Cys53–Cys68, Cys54–Cys64, and Cys59–Cys67.

Belongs to the conotoxin M superfamily. In terms of tissue distribution, expressed by the venom duct.

It is found in the secreted. The protein is Conotoxin reg3.14 of Conus regius (Crown cone).